The sequence spans 132 residues: D-beta-hydroxybutyrate dehydrogenase, mitochondrial (132 aa).

3 to 27 is a binding site for NAD(+); the sequence is LVTGCDSGFGFSLAKHLHSKGFLVF. K17 bears the N6-acetyllysine mark. Residue S59 coordinates substrate. Y66 serves as the catalytic Proton acceptor. The residue at position 70 (K70) is an N6-acetyllysine. S77 carries O-linked (GlcNAc) serine glycosylation. The residue at position 104 (S104) is a Phosphoserine.

It belongs to the short-chain dehydrogenases/reductases (SDR) family. In terms of assembly, homotetramer.

It localises to the mitochondrion inner membrane. The protein resides in the mitochondrion matrix. The enzyme catalyses (R)-3-hydroxybutanoate + NAD(+) = acetoacetate + NADH + H(+). Its activity is regulated as follows. Requires phosphatidylcholine as an allosteric activator for enzymatic activity. The protein is D-beta-hydroxybutyrate dehydrogenase, mitochondrial of Mesocricetus auratus (Golden hamster).